Here is a 343-residue protein sequence, read N- to C-terminus: Phosphoribosylformylglycinamidine cyclo-ligase (343 aa).

Belongs to the AIR synthase family.

The protein resides in the cytoplasm. The catalysed reaction is 2-formamido-N(1)-(5-O-phospho-beta-D-ribosyl)acetamidine + ATP = 5-amino-1-(5-phospho-beta-D-ribosyl)imidazole + ADP + phosphate + H(+). Its pathway is purine metabolism; IMP biosynthesis via de novo pathway; 5-amino-1-(5-phospho-D-ribosyl)imidazole from N(2)-formyl-N(1)-(5-phospho-D-ribosyl)glycinamide: step 2/2. This Rippkaea orientalis (strain PCC 8801 / RF-1) (Cyanothece sp. (strain PCC 8801)) protein is Phosphoribosylformylglycinamidine cyclo-ligase.